A 169-amino-acid chain; its full sequence is Thaumatin-like pathogenesis-related protein 3 (169 aa).

The first 21 residues, 1–21, serve as a signal peptide directing secretion; sequence MATSSAVLFLLLAVFAAGASA.

This sequence belongs to the thaumatin family.

Its function is as follows. Associated with resistance against stem rust fungi. In Avena sativa (Oat), this protein is Thaumatin-like pathogenesis-related protein 3 (RASTL-3).